The sequence spans 214 residues: ATP phosphoribosyltransferase (214 aa).

It belongs to the ATP phosphoribosyltransferase family. Short subfamily. As to quaternary structure, heteromultimer composed of HisG and HisZ subunits.

The protein resides in the cytoplasm. It carries out the reaction 1-(5-phospho-beta-D-ribosyl)-ATP + diphosphate = 5-phospho-alpha-D-ribose 1-diphosphate + ATP. The protein operates within amino-acid biosynthesis; L-histidine biosynthesis; L-histidine from 5-phospho-alpha-D-ribose 1-diphosphate: step 1/9. Functionally, catalyzes the condensation of ATP and 5-phosphoribose 1-diphosphate to form N'-(5'-phosphoribosyl)-ATP (PR-ATP). Has a crucial role in the pathway because the rate of histidine biosynthesis seems to be controlled primarily by regulation of HisG enzymatic activity. This chain is ATP phosphoribosyltransferase, found in Streptococcus gordonii (strain Challis / ATCC 35105 / BCRC 15272 / CH1 / DL1 / V288).